We begin with the raw amino-acid sequence, 209 residues long: Large ribosomal subunit protein uL3 (209 aa).

An N5-methylglutamine modification is found at Q150.

The protein belongs to the universal ribosomal protein uL3 family. In terms of assembly, part of the 50S ribosomal subunit. Forms a cluster with proteins L14 and L19. In terms of processing, methylated by PrmB.

In terms of biological role, one of the primary rRNA binding proteins, it binds directly near the 3'-end of the 23S rRNA, where it nucleates assembly of the 50S subunit. This is Large ribosomal subunit protein uL3 from Ectopseudomonas mendocina (strain ymp) (Pseudomonas mendocina).